Reading from the N-terminus, the 236-residue chain is LexA repressor (236 aa).

Residues 26–46 (FDEMKDALDLRSKSGIHRLIT) constitute a DNA-binding region (H-T-H motif). The disordered stretch occupies residues 85–109 (PSVIEGNLGKVRPPSPTPAEDDHDR). Active-site for autocatalytic cleavage activity residues include Ser157 and Lys195.

It belongs to the peptidase S24 family. Homodimer.

The enzyme catalyses Hydrolysis of Ala-|-Gly bond in repressor LexA.. Represses a number of genes involved in the response to DNA damage (SOS response), including recA and lexA. In the presence of single-stranded DNA, RecA interacts with LexA causing an autocatalytic cleavage which disrupts the DNA-binding part of LexA, leading to derepression of the SOS regulon and eventually DNA repair. The protein is LexA repressor of Rhodopseudomonas palustris (strain ATCC BAA-98 / CGA009).